The chain runs to 293 residues: Aminodeoxychorismate lyase (293 aa).

K146 is modified (N6-(pyridoxal phosphate)lysine).

It belongs to the class-IV pyridoxal-phosphate-dependent aminotransferase family. As to quaternary structure, homodimer. It depends on pyridoxal 5'-phosphate as a cofactor.

It catalyses the reaction 4-amino-4-deoxychorismate = 4-aminobenzoate + pyruvate + H(+). The protein operates within cofactor biosynthesis; tetrahydrofolate biosynthesis; 4-aminobenzoate from chorismate: step 2/2. Involved in the biosynthesis of p-aminobenzoate (PABA), a precursor of tetrahydrofolate. Converts 4-amino-4-deoxychorismate into 4-aminobenzoate (PABA) and pyruvate. The sequence is that of Aminodeoxychorismate lyase from Bacillus subtilis (strain 168).